We begin with the raw amino-acid sequence, 336 residues long: Cell division protein ZipA (336 aa).

Residues 1-6 (MEDLQL) are Periplasmic-facing. The chain crosses the membrane as a helical span at residues 7–27 (VLFVLGAIAIIAVLVHGFWSI). Residues 28-336 (RKQQPKPIKE…DYLRRIKAIV (309 aa)) lie on the Cytoplasmic side of the membrane. Disordered regions lie at residues 31-118 (QPKP…PVRA) and 174-200 (YGATTQASPQPASPVQSQAPREPEPLG). The span at 73–91 (LPSSRNHTSVPVMTLQKAS) shows a compositional bias: polar residues. A compositionally biased stretch (basic and acidic residues) spans 108–118 (TTAERAEPVRA). Residues 179–193 (QASPQPASPVQSQAP) show a composition bias toward low complexity.

The protein belongs to the ZipA family. In terms of assembly, interacts with FtsZ via their C-terminal domains.

It localises to the cell inner membrane. Its function is as follows. Essential cell division protein that stabilizes the FtsZ protofilaments by cross-linking them and that serves as a cytoplasmic membrane anchor for the Z ring. Also required for the recruitment to the septal ring of downstream cell division proteins. The polypeptide is Cell division protein ZipA (Shewanella denitrificans (strain OS217 / ATCC BAA-1090 / DSM 15013)).